We begin with the raw amino-acid sequence, 514 residues long: 5'-AMP-activated protein kinase subunit gamma-3 (514 aa).

2 disordered regions span residues 1 to 121 (MELA…FPKA) and 134 to 155 (DNPPTERDILPSDCAASASDSN). Residues 59–71 (SRSWPSRAVTTSS) show a composition bias toward polar residues. CBS domains are found at residues 222–283 (MATS…RSPL), 305–363 (CFKP…GTLL), and 380–440 (TFRD…HLDM). ADP is bound by residues Arg-250, 265 to 270 (MLTITD), Val-310, 331 to 332 (HR), and Lys-350. Residues Arg-250, 265–270 (MLTITD), Val-310, His-331, 331–332 (HR), Lys-350, Thr-380, Ala-385, 406–407 (SA), 422–425 (SRFD), Arg-449, Leu-457, His-478, 478–479 (HR), and 494–497 (SLSD) each bind AMP. ATP contacts are provided by residues Arg-250, 265–270 (MLTITD), Val-310, 331–332 (HR), Arg-332, and Lys-350. Positions 318–339 (LFEAVYALIKNRIHRLPVLDPV) match the AMPK pseudosubstrate motif. Residues 422–425 (SRFD), Arg-449, Leu-457, and 478–479 (HR) contribute to the ADP site. ATP-binding positions include 422-425 (SRFD), Arg-449, Leu-457, and 478-479 (HR). Residues 452-511 (CLEGVLSCQPHETLGEVIDRIVREQVHRLVLVDETQHLLGVVSLSDILQALVLSPAGIDA) form the CBS 4 domain.

This sequence belongs to the 5'-AMP-activated protein kinase gamma subunit family. AMPK is a heterotrimer of an alpha catalytic subunit (PRKAA1 or PRKAA2), a beta (PRKAB1 or PRKAB2) and a gamma non-catalytic subunits (PRKAG1, PRKAG2 or PRKAG3). Interacts with FNIP1 and FNIP2. Phosphorylated by ULK1; leading to negatively regulate AMPK activity and suggesting the existence of a regulatory feedback loop between ULK1 and AMPK. In terms of processing, glycosylated; O-GlcNAcylated by OGT, promoting the AMP-activated protein kinase (AMPK) activity. Muscle.

Its function is as follows. AMP/ATP-binding subunit of AMP-activated protein kinase (AMPK), an energy sensor protein kinase that plays a key role in regulating cellular energy metabolism. In response to reduction of intracellular ATP levels, AMPK activates energy-producing pathways and inhibits energy-consuming processes: inhibits protein, carbohydrate and lipid biosynthesis, as well as cell growth and proliferation. AMPK acts via direct phosphorylation of metabolic enzymes, and by longer-term effects via phosphorylation of transcription regulators. AMPK also acts as a regulator of cellular polarity by remodeling the actin cytoskeleton; probably by indirectly activating myosin. The AMPK gamma3 subunit is a non-catalytic subunit with a regulatory role in muscle energy metabolism. It mediates binding to AMP, ADP and ATP, leading to AMPK activation or inhibition: AMP-binding results in allosteric activation of alpha catalytic subunit (PRKAA1 or PRKAA2) both by inducing phosphorylation and preventing dephosphorylation of catalytic subunits. ADP also stimulates phosphorylation, without stimulating already phosphorylated catalytic subunit. ATP promotes dephosphorylation of catalytic subunit, rendering the AMPK enzyme inactive. This is 5'-AMP-activated protein kinase subunit gamma-3 (PRKAG3) from Sus scrofa (Pig).